A 35-amino-acid polypeptide reads, in one-letter code: uncharacterized protein (35 aa).

Residues 1–18 (MRSLVFVQLSLLSWEIFC) form the signal peptide.

This is an uncharacterized protein from Saccharomyces cerevisiae (strain ATCC 204508 / S288c) (Baker's yeast).